A 453-amino-acid polypeptide reads, in one-letter code: Methylenetetrahydrofolate--tRNA-(uracil-5-)-methyltransferase TrmFO (453 aa).

G10–G15 lines the FAD pocket. A disordered region spans residues E433–G453. The span at A441 to G453 shows a compositional bias: low complexity.

The protein belongs to the MnmG family. TrmFO subfamily. FAD serves as cofactor.

Its subcellular location is the cytoplasm. The enzyme catalyses uridine(54) in tRNA + (6R)-5,10-methylene-5,6,7,8-tetrahydrofolate + NADH + H(+) = 5-methyluridine(54) in tRNA + (6S)-5,6,7,8-tetrahydrofolate + NAD(+). It carries out the reaction uridine(54) in tRNA + (6R)-5,10-methylene-5,6,7,8-tetrahydrofolate + NADPH + H(+) = 5-methyluridine(54) in tRNA + (6S)-5,6,7,8-tetrahydrofolate + NADP(+). In terms of biological role, catalyzes the folate-dependent formation of 5-methyl-uridine at position 54 (M-5-U54) in all tRNAs. The polypeptide is Methylenetetrahydrofolate--tRNA-(uracil-5-)-methyltransferase TrmFO (Anaeromyxobacter dehalogenans (strain 2CP-1 / ATCC BAA-258)).